The chain runs to 90 residues: Small ribosomal subunit protein uS15c (90 aa).

Belongs to the universal ribosomal protein uS15 family. Part of the 30S ribosomal subunit.

The protein localises to the plastid. It localises to the chloroplast. This Dioscorea elephantipes (Elephant's foot yam) protein is Small ribosomal subunit protein uS15c (rps15).